The chain runs to 172 residues: Peptide deformylase (172 aa).

Fe cation-binding residues include Cys-92 and His-134. Glu-135 is a catalytic residue. Residue His-138 coordinates Fe cation.

It belongs to the polypeptide deformylase family. It depends on Fe(2+) as a cofactor.

It catalyses the reaction N-terminal N-formyl-L-methionyl-[peptide] + H2O = N-terminal L-methionyl-[peptide] + formate. Functionally, removes the formyl group from the N-terminal Met of newly synthesized proteins. Requires at least a dipeptide for an efficient rate of reaction. N-terminal L-methionine is a prerequisite for activity but the enzyme has broad specificity at other positions. The chain is Peptide deformylase from Saccharophagus degradans (strain 2-40 / ATCC 43961 / DSM 17024).